Consider the following 177-residue polypeptide: Antigen TyF1 (177 aa).

This sequence belongs to the Dps family. As to quaternary structure, homodecamer.

The sequence is that of Antigen TyF1 from Treponema pallidum subsp. pertenue (Yaws treponeme).